The sequence spans 374 residues: UDP-N-acetylglucosamine--N-acetylmuramyl-(pentapeptide) pyrophosphoryl-undecaprenol N-acetylglucosamine transferase (374 aa).

UDP-N-acetyl-alpha-D-glucosamine contacts are provided by residues 13–15 (TGG), Asn124, Arg165, Ser193, and Gln294.

The protein belongs to the glycosyltransferase 28 family. MurG subfamily.

It is found in the cell inner membrane. It carries out the reaction di-trans,octa-cis-undecaprenyl diphospho-N-acetyl-alpha-D-muramoyl-L-alanyl-D-glutamyl-meso-2,6-diaminopimeloyl-D-alanyl-D-alanine + UDP-N-acetyl-alpha-D-glucosamine = di-trans,octa-cis-undecaprenyl diphospho-[N-acetyl-alpha-D-glucosaminyl-(1-&gt;4)]-N-acetyl-alpha-D-muramoyl-L-alanyl-D-glutamyl-meso-2,6-diaminopimeloyl-D-alanyl-D-alanine + UDP + H(+). The protein operates within cell wall biogenesis; peptidoglycan biosynthesis. Its function is as follows. Cell wall formation. Catalyzes the transfer of a GlcNAc subunit on undecaprenyl-pyrophosphoryl-MurNAc-pentapeptide (lipid intermediate I) to form undecaprenyl-pyrophosphoryl-MurNAc-(pentapeptide)GlcNAc (lipid intermediate II). This Rhizobium leguminosarum bv. trifolii (strain WSM2304) protein is UDP-N-acetylglucosamine--N-acetylmuramyl-(pentapeptide) pyrophosphoryl-undecaprenol N-acetylglucosamine transferase.